Reading from the N-terminus, the 259-residue chain is MTRYRRVVVKLSGRAIAGSAEFGFDSNALEHLAREIIAVRQSGVEVAIVVGGGNLFRGNQSDRWGIDRVEADNIGMLSTVINSLLLRGKLTALGEDNLRVMTAVPVPAVAEPYIRLRAVHLLEKGATVILACGNGQPFLTTDYPAVQRALELNADAVLAAKDGVDGVYDSDPKINPGARLFSHLSYDEVISRGLRVMDQSAFILARDFGMPLHIFDIEQRGAMTAICRGEHRGTVISSSPEKSEEFGNEVLASPAESTA.

ATP is bound at residue 10 to 13 (KLSG). A UMP-binding site is contributed by Gly52. ATP contacts are provided by Gly53 and Arg57. Residues Asp72 and 134 to 141 (NGQPFLTT) each bind UMP. ATP is bound by residues Tyr168 and Asp171. The disordered stretch occupies residues 236 to 259 (ISSSPEKSEEFGNEVLASPAESTA).

This sequence belongs to the UMP kinase family. As to quaternary structure, homohexamer.

Its subcellular location is the cytoplasm. The catalysed reaction is UMP + ATP = UDP + ADP. Its pathway is pyrimidine metabolism; CTP biosynthesis via de novo pathway; UDP from UMP (UMPK route): step 1/1. With respect to regulation, inhibited by UTP. Catalyzes the reversible phosphorylation of UMP to UDP. The sequence is that of Uridylate kinase from Frankia casuarinae (strain DSM 45818 / CECT 9043 / HFP020203 / CcI3).